An 868-amino-acid chain; its full sequence is Rifampicin phosphotransferase (868 aa).

The segment at 1–313 is ATP-binding; it reads MSSFVLDFQE…IYIVQSRPIT (313 aa). ATP is bound by residues Lys-22, Arg-116, Gly-131, Thr-135, Gln-182, Glu-296, Gln-308, and Arg-310. The segment at 326-756 is rifampicin-binding; the sequence is NHVYISVGHQ…TSDGEIITGK (431 aa). Residues 769–867 are swivel phosphohistidine; the sequence is GLPVSSGVVE…VHGTEGYIEV (99 aa). His-827 acts as the Tele-phosphohistidine intermediate in catalysis.

This sequence belongs to the rifampicin phosphotransferase family.

The enzyme catalyses rifampicin + ATP + H2O = 21-phosphorifampicin + AMP + phosphate + 2 H(+). Catalyzes the phosphorylation of rifampicin, also known as rifampin (RIF), leading to its inactivation. Confers high level resistance to a variety of clinically used rifamycin antibiotics. Does not show phosphoenolpyruvate (PEP) synthase activity. This Bacillus cereus (strain ATCC 14579 / DSM 31 / CCUG 7414 / JCM 2152 / NBRC 15305 / NCIMB 9373 / NCTC 2599 / NRRL B-3711) protein is Rifampicin phosphotransferase.